A 141-amino-acid chain; its full sequence is Galactose-6-phosphate isomerase subunit LacA (141 aa).

It belongs to the LacAB/RpiB family. In terms of assembly, heteromultimeric protein consisting of LacA and LacB.

The catalysed reaction is aldehydo-D-galactose 6-phosphate = keto-D-tagatose 6-phosphate. The protein operates within carbohydrate metabolism; D-galactose 6-phosphate degradation; D-tagatose 6-phosphate from D-galactose 6-phosphate: step 1/1. This Streptococcus pneumoniae (strain 70585) protein is Galactose-6-phosphate isomerase subunit LacA.